A 117-amino-acid polypeptide reads, in one-letter code: Large ribosomal subunit protein uL18 (117 aa).

This sequence belongs to the universal ribosomal protein uL18 family. In terms of assembly, part of the 50S ribosomal subunit; part of the 5S rRNA/L5/L18/L25 subcomplex. Contacts the 5S and 23S rRNAs.

This is one of the proteins that bind and probably mediate the attachment of the 5S RNA into the large ribosomal subunit, where it forms part of the central protuberance. The sequence is that of Large ribosomal subunit protein uL18 from Photobacterium profundum (strain SS9).